The primary structure comprises 394 residues: Ornithine aminotransferase 1 (394 aa).

Lys252 carries the N6-(pyridoxal phosphate)lysine modification.

Belongs to the class-III pyridoxal-phosphate-dependent aminotransferase family. OAT subfamily. Requires pyridoxal 5'-phosphate as cofactor.

It localises to the cytoplasm. The catalysed reaction is a 2-oxocarboxylate + L-ornithine = L-glutamate 5-semialdehyde + an L-alpha-amino acid. The protein operates within amino-acid biosynthesis; L-proline biosynthesis; L-glutamate 5-semialdehyde from L-ornithine: step 1/1. Catalyzes the interconversion of ornithine to glutamate semialdehyde. This is Ornithine aminotransferase 1 from Staphylococcus aureus (strain MRSA252).